The chain runs to 402 residues: Protein lag-2 (402 aa).

Positions 1–15 (MIAYFLLLLTCLPVL) are cleaved as a signal peptide. Residues 16–279 (QARVEVHQEF…TTTTPTTVEI (264 aa)) are Extracellular-facing. 2 N-linked (GlcNAc...) asparagine glycosylation sites follow: Asn72 and Asn105. The DSL domain occupies 122 to 166 (VTCARNYFGNRCENFCDAHLAKAARKRCDAMGRLRCDIGWMGPHC). Cystine bridges form between Cys124–Cys133, Cys137–Cys149, Cys157–Cys166, Cys175–Cys183, Cys177–Cys204, Cys206–Cys215, Cys233–Cys245, Cys239–Cys254, and Cys256–Cys265. EGF-like domains are found at residues 171-216 (DPRK…TRCE) and 229-266 (RPDA…EFCE). Asn194 carries an N-linked (GlcNAc...) asparagine glycan. The helical transmembrane segment at 280–306 (TVSTSGYSSAVYITVALFVIFSIIIGC) threads the bilayer. Residues 307-402 (FKYKFKPMRQ…PPSIPACHYV (96 aa)) lie on the Cytoplasmic side of the membrane.

May interact with lin-12 / Notch receptor. In terms of tissue distribution, expressed in the gonad distal tip cell (DTC) of hermaphrodites.

Its subcellular location is the cell membrane. In terms of biological role, probable ligand for lin-12/Notch and glp-1/Notch receptors and involved in the mediation of Notch signaling. Involved in the lin-12/Notch pathway signaling of cell fate in vulval precursor cells (VPCs) and in the postembryonic mesodermal lineage (M lineage), acting redundantly with dsl-1 and apx-1. Functions in uterine cells to promote basement membrane mobility during tissue remodeling. Required for oocyte growth control, acting redundantly with apx-1, perhaps signaling via the glp-1/Notch pathway. Plays a role in Notch-dependent induction of left-right asymmetry in interneurons and motoneurons. Involved in maintaining the developmentally arrested larval state known as dauer, probably signaling in the glp-1/Notch pathway. Required for normal sleep bout quantity and arousal thresholds during the transition from the last larval stage to adulthood in well-fed animals. The protein is Protein lag-2 of Caenorhabditis elegans.